Here is a 330-residue protein sequence, read N- to C-terminus: Malate dehydrogenase (330 aa).

13 to 19 serves as a coordination point for NAD(+); the sequence is GAAGQIG. Substrate contacts are provided by arginine 94 and arginine 100. NAD(+)-binding positions include asparagine 107, glutamine 114, and 131 to 133; that span reads VGN. Asparagine 133 and arginine 164 together coordinate substrate. Catalysis depends on histidine 189, which acts as the Proton acceptor.

This sequence belongs to the LDH/MDH superfamily. MDH type 2 family.

The enzyme catalyses (S)-malate + NAD(+) = oxaloacetate + NADH + H(+). In terms of biological role, catalyzes the reversible oxidation of malate to oxaloacetate. This chain is Malate dehydrogenase, found in Deinococcus radiodurans (strain ATCC 13939 / DSM 20539 / JCM 16871 / CCUG 27074 / LMG 4051 / NBRC 15346 / NCIMB 9279 / VKM B-1422 / R1).